The sequence spans 315 residues: Ribosomal RNA small subunit methyltransferase H (315 aa).

S-adenosyl-L-methionine is bound by residues 35-37 (AGH), aspartate 55, phenylalanine 84, aspartate 105, and glutamine 112.

The protein belongs to the methyltransferase superfamily. RsmH family.

The protein localises to the cytoplasm. The catalysed reaction is cytidine(1402) in 16S rRNA + S-adenosyl-L-methionine = N(4)-methylcytidine(1402) in 16S rRNA + S-adenosyl-L-homocysteine + H(+). Specifically methylates the N4 position of cytidine in position 1402 (C1402) of 16S rRNA. In Streptococcus agalactiae serotype III (strain NEM316), this protein is Ribosomal RNA small subunit methyltransferase H.